A 373-amino-acid polypeptide reads, in one-letter code: Dynein regulatory complex protein 9 (373 aa).

Residues 145 to 200 (EQAMKETIEREKNTTAAVRQLRNDLREEKLDHEEKMKEKKKGLSTLKEQLKALKMD) adopt a coiled-coil conformation. One can recognise an IQ domain in the interval 336–365 (RAQAAVIIQAWWRGHKVRMVMSGGGKKGAK).

Belongs to the DRC9 family. In terms of assembly, component of the nexin-dynein regulatory complex (N-DRC).

The protein resides in the cytoplasm. Its subcellular location is the cytoskeleton. It localises to the flagellum axoneme. In terms of biological role, component of the nexin-dynein regulatory complex (N-DRC), a key regulator of ciliary/flagellar motility which maintains the alignment and integrity of the distal axoneme and regulates microtubule sliding in motile axonemes. This is Dynein regulatory complex protein 9 from Chlamydomonas reinhardtii (Chlamydomonas smithii).